The chain runs to 359 residues: MQAATVVINRRALRHNLQRLRELAPASKMVAVVKANAYGHGLLETARTLPDADAFGVARLEEALRLRAGGITKPVLLLEGFFDARDLPTISAQHFHTAVHNEEQLAALEEASLDEPVTVWMKLDTGMHRLGVRPEQAEAFYHRLTQCKNVRQPVNIVSHFARADEPKCGATEKQLAIFNTFCEGKPGQRSIAASGGILLWPQSHFDWVRPGIILYGVSPLEDRSTGADFGCQPVMSLTSSLIAVREHKAGEPVGYGGTWVSERDTRLGVVAMGYGDGYPRAAPSGTPVLVNGREVPIVGRVAMDMICVDLGPQAQDKAGDPVILWGEGLPVERIAEMTKVSAYELITRLTSRVAMKYVD.

K34 functions as the Proton acceptor; specific for D-alanine in the catalytic mechanism. At K34 the chain carries N6-(pyridoxal phosphate)lysine. N6-carboxylysine is present on K122. A substrate-binding site is contributed by R129. The active-site Proton acceptor; specific for L-alanine is the Y255. M303 lines the substrate pocket.

This sequence belongs to the alanine racemase family. In terms of assembly, homodimer. Pyridoxal 5'-phosphate serves as cofactor.

The enzyme catalyses L-alanine = D-alanine. Its pathway is amino-acid biosynthesis; D-alanine biosynthesis; D-alanine from L-alanine: step 1/1. It participates in cell wall biogenesis; peptidoglycan biosynthesis. Its function is as follows. Catalyzes the interconversion of L-alanine and D-alanine. Provides the D-alanine required for cell wall biosynthesis. This Escherichia coli (strain K12) protein is Alanine racemase, biosynthetic.